Here is a 469-residue protein sequence, read N- to C-terminus: Phenylalanine--tRNA ligase, mitochondrial (469 aa).

The N-terminal 17 residues, 1-17 (MFLNRMMKTRTGLYRLY), are a transit peptide targeting the mitochondrion. Residues 126–129 (SAHE), Arg-155, 162–164 (THY), 169–171 (QME), Glu-302, and Phe-329 each bind substrate. The FDX-ACB domain occupies 372–469 (SKHPGSFRDV…LVKEYSVELR (98 aa)).

It belongs to the class-II aminoacyl-tRNA synthetase family. As to quaternary structure, monomer.

It localises to the mitochondrion matrix. The enzyme catalyses tRNA(Phe) + L-phenylalanine + ATP = L-phenylalanyl-tRNA(Phe) + AMP + diphosphate + H(+). In terms of biological role, is responsible for the charging of tRNA(Phe) with phenylalanine in mitochondrial translation. The chain is Phenylalanine--tRNA ligase, mitochondrial (MSF1) from Saccharomyces cerevisiae (strain ATCC 204508 / S288c) (Baker's yeast).